A 41-amino-acid polypeptide reads, in one-letter code: Large ribosomal subunit protein bL36 (41 aa).

Belongs to the bacterial ribosomal protein bL36 family.

In Xylella fastidiosa (strain 9a5c), this protein is Large ribosomal subunit protein bL36.